The sequence spans 63 residues: UPF0434 protein Sde_1297 (63 aa).

The protein belongs to the UPF0434 family.

In Saccharophagus degradans (strain 2-40 / ATCC 43961 / DSM 17024), this protein is UPF0434 protein Sde_1297.